The sequence spans 156 residues: Small ribosomal subunit protein uS7 (156 aa).

Belongs to the universal ribosomal protein uS7 family. As to quaternary structure, part of the 30S ribosomal subunit. Contacts proteins S9 and S11.

Its function is as follows. One of the primary rRNA binding proteins, it binds directly to 16S rRNA where it nucleates assembly of the head domain of the 30S subunit. Is located at the subunit interface close to the decoding center, probably blocks exit of the E-site tRNA. This is Small ribosomal subunit protein uS7 from Bartonella henselae (strain ATCC 49882 / DSM 28221 / CCUG 30454 / Houston 1) (Rochalimaea henselae).